Consider the following 264-residue polypeptide: ATP synthase subunit a (264 aa).

Helical transmembrane passes span 29 to 49, 90 to 110, 111 to 131, 134 to 154, 177 to 197, 208 to 228, and 235 to 255; these read TWHI…LWIF, IAPL…MDMI, PVDW…KVVP, DVNI…YYSI, IPVN…SLAL, LIFI…TLGV, and LIFH…LTIV.

It belongs to the ATPase A chain family. As to quaternary structure, F-type ATPases have 2 components, CF(1) - the catalytic core - and CF(0) - the membrane proton channel. CF(1) has five subunits: alpha(3), beta(3), gamma(1), delta(1), epsilon(1). CF(0) has three main subunits: a(1), b(2) and c(9-12). The alpha and beta chains form an alternating ring which encloses part of the gamma chain. CF(1) is attached to CF(0) by a central stalk formed by the gamma and epsilon chains, while a peripheral stalk is formed by the delta and b chains.

Its subcellular location is the cell inner membrane. Its function is as follows. Key component of the proton channel; it plays a direct role in the translocation of protons across the membrane. The protein is ATP synthase subunit a of Shewanella denitrificans (strain OS217 / ATCC BAA-1090 / DSM 15013).